Reading from the N-terminus, the 538-residue chain is Phosphoenolpyruvate carboxykinase (ATP) (538 aa).

3 residues coordinate substrate: arginine 64, tyrosine 205, and lysine 211. Residues lysine 211, histidine 230, and 246–254 (GLSGTGKTT) contribute to the ATP site. The Mn(2+) site is built by lysine 211 and histidine 230. Residue aspartate 267 coordinates Mn(2+). Residues glutamate 295, arginine 331, 447–448 (RI), and threonine 453 contribute to the ATP site. A substrate-binding site is contributed by arginine 331.

Belongs to the phosphoenolpyruvate carboxykinase (ATP) family. As to quaternary structure, monomer. Mn(2+) serves as cofactor.

It localises to the cytoplasm. It catalyses the reaction oxaloacetate + ATP = phosphoenolpyruvate + ADP + CO2. The protein operates within carbohydrate biosynthesis; gluconeogenesis. Functionally, involved in the gluconeogenesis. Catalyzes the conversion of oxaloacetate (OAA) to phosphoenolpyruvate (PEP) through direct phosphoryl transfer between the nucleoside triphosphate and OAA. The protein is Phosphoenolpyruvate carboxykinase (ATP) of Pasteurella multocida (strain Pm70).